Here is a 118-residue protein sequence, read N- to C-terminus: Na(+)/H(+) antiporter subunit G1 (118 aa).

Transmembrane regions (helical) follow at residues 9–29 (LAVIFVILGAIISAVTAIGII), 47–67 (LGAIFLLFGTFLYFIATDGYI), and 69–89 (MQLIFGILFILITGPLSSHLI).

This sequence belongs to the CPA3 antiporters (TC 2.A.63) subunit G family. May form a heterooligomeric complex that consists of seven subunits: mnhA1, mnhB1, mnhC1, mnhD1, mnhE1, mnhF1 and mnhG1.

Its subcellular location is the cell membrane. In terms of biological role, mnh complex is a Na(+)/H(+) antiporter involved in Na(+) excretion. This is Na(+)/H(+) antiporter subunit G1 (mnhG1) from Staphylococcus haemolyticus (strain JCSC1435).